We begin with the raw amino-acid sequence, 289 residues long: 4-hydroxybenzoate octaprenyltransferase (289 aa).

The next 9 helical transmembrane spans lie at 22-42, 45-65, 96-116, 118-138, 140-160, 164-184, 211-231, 236-256, and 267-287; these read AGWL…SHGF, WHLV…GCCI, LGLG…TNAV, IAWS…KRYV, MPQA…FAAV, VPPL…AYDT, VAGV…ALIQ, AIFM…GWLI, and AFRL…LSYW.

The protein belongs to the UbiA prenyltransferase family. The cofactor is Mg(2+).

It is found in the cell inner membrane. The catalysed reaction is all-trans-octaprenyl diphosphate + 4-hydroxybenzoate = 4-hydroxy-3-(all-trans-octaprenyl)benzoate + diphosphate. The protein operates within cofactor biosynthesis; ubiquinone biosynthesis. Functionally, catalyzes the prenylation of para-hydroxybenzoate (PHB) with an all-trans polyprenyl group. Mediates the second step in the final reaction sequence of ubiquinone-8 (UQ-8) biosynthesis, which is the condensation of the polyisoprenoid side chain with PHB, generating the first membrane-bound Q intermediate 3-octaprenyl-4-hydroxybenzoate. This is 4-hydroxybenzoate octaprenyltransferase from Polaromonas naphthalenivorans (strain CJ2).